The chain runs to 364 residues: DNA-(apurinic or apyrimidinic site) endonuclease (364 aa).

Basic and acidic residues-rich tracts occupy residues 1-12 (MKRFFKPIEKEN) and 23-39 (PEKRDGDGDGVEEEKNQ). The segment at 1-42 (MKRFFKPIEKENSPAAKKPCLSPEKRDGDGDGVEEEKNQNEP) is disordered. Residue Glu80 coordinates Mg(2+). Residue Tyr182 is part of the active site. Mg(2+) contacts are provided by Asp222, Asn224, and Asp342. Asp222 acts as the Proton donor/acceptor in catalysis.

Belongs to the DNA repair enzymes AP/exoA family. As to quaternary structure, interacts with ROS1. ROS1 is required for APE1L to stably associate with the DNA substrate. Mg(2+) serves as cofactor. Expressed in leaves, flower buds and developing siliques. Not detected in roots.

It localises to the nucleus. Its subcellular location is the nucleolus. Apurinic/apyrimidinic (AP) endonuclease involved in active DNA demethylation and gene imprinting. According to a report, also displays an in vitro 3'-phosphatase activity. According to another report, has no in vitro 3'-phosphatase activity. Catalyzes the conversion of the 3'-blocking groups 3'-phosphor-alpha,beta-unsaturated aldehyde (3'-PUA) generated by ROS1 to 3'-OH. Has a strong non-specific affinity to DNA. Redundant with APE2 and at least one functional allele is required for seed viability. The polypeptide is DNA-(apurinic or apyrimidinic site) endonuclease (Arabidopsis thaliana (Mouse-ear cress)).